The following is a 112-amino-acid chain: DNA-binding protein TON_1102 (112 aa).

This sequence belongs to the PDCD5 family.

The chain is DNA-binding protein TON_1102 from Thermococcus onnurineus (strain NA1).